We begin with the raw amino-acid sequence, 360 residues long: GDSL esterase/lipase At2g31550 (360 aa).

The first 27 residues, 1–27, serve as a signal peptide directing secretion; sequence MSTSKAITLTLFITTTLLASCDAAANA. N-linked (GlcNAc...) asparagine glycosylation occurs at asparagine 26. The Nucleophile role is filled by serine 42. Residues asparagine 104 and asparagine 326 are each glycosylated (N-linked (GlcNAc...) asparagine). Active-site residues include aspartate 334 and histidine 337.

Belongs to the 'GDSL' lipolytic enzyme family.

The protein resides in the secreted. The polypeptide is GDSL esterase/lipase At2g31550 (Arabidopsis thaliana (Mouse-ear cress)).